The sequence spans 132 residues: Agouti-signaling protein (132 aa).

A signal peptide spans 1 to 22; sequence MDVTRLLLATLLVFLCFFTVYS. N-linked (GlcNAc...) asparagine glycosylation is present at Asn-39. Residues 61–87 are disordered; that stretch reads HISRKEAEKKRSSKKEASMKKVARPRT. Over residues 64-79 the composition is skewed to basic and acidic residues; sequence RKEAEKKRSSKKEASM. 5 disulfides stabilise this stretch: Cys-93–Cys-108, Cys-100–Cys-114, Cys-107–Cys-125, Cys-111–Cys-132, and Cys-116–Cys-123. One can recognise an Agouti domain in the interval 93-132; the sequence is CVATRDSCKPPAPACCDPCASCQCRFFRSACSCRVLSLNC.

It localises to the secreted. Involved in the regulation of melanogenesis. The binding of ASP to MC1R precludes alpha-MSH initiated signaling and thus blocks production of cAMP, leading to a down-regulation of eumelanogenesis (brown/black pigment) and thus increasing synthesis of pheomelanin (yellow/red pigment). The chain is Agouti-signaling protein (ASIP) from Colobus polykomos (Western black-and-white colobus monkey).